The chain runs to 291 residues: GTPase Era (291 aa).

Residues 2–167 (KSGFVSIIGR…LDEIVKCLNE (166 aa)) form the Era-type G domain. The segment at 10 to 17 (GRTNAGKS) is G1. A GTP-binding site is contributed by 10–17 (GRTNAGKS). The G2 stretch occupies residues 36–40 (NATRR). Positions 57-60 (DTPG) are G3. Residues 57 to 61 (DTPGL) and 116 to 119 (NKVD) contribute to the GTP site. Residues 116–119 (NKVD) are G4. The G5 stretch occupies residues 146-148 (YSS). One can recognise a KH type-2 domain in the interval 186-274 (YRDFILESIY…LLKLFVTVKK (89 aa)).

This sequence belongs to the TRAFAC class TrmE-Era-EngA-EngB-Septin-like GTPase superfamily. Era GTPase family. In terms of assembly, monomer.

It localises to the cytoplasm. Its subcellular location is the cell inner membrane. Functionally, an essential GTPase that binds both GDP and GTP, with rapid nucleotide exchange. Plays a role in 16S rRNA processing and 30S ribosomal subunit biogenesis and possibly also in cell cycle regulation and energy metabolism. The polypeptide is GTPase Era (Campylobacter jejuni subsp. doylei (strain ATCC BAA-1458 / RM4099 / 269.97)).